The primary structure comprises 340 residues: Guanine nucleotide-binding protein G(I)/G(S)/G(T) subunit beta-3 (340 aa).

WD repeat units lie at residues 53-83, 95-125, 141-170, 182-212, 224-254, 268-298, and 310-340; these read GHLAKIYAMHWATDSKLLVSASQDGKLIVWD, LRSSWVMTCAYAPSGNFVACGGLDNMCSIYN, AHTGYLSCCRFLDDNNIVTSSGDTTCALWD, GHTGDCMSLAVSPDFNLFISGACDASAKLWD, GHESDINAICFFPNGEAICTGSDDASCRLFD, SIICGITSVAFSLSGRLLFAGYDDFNCNVWD, and GHDNRVSCLGVTADGMAVATGSWDSFLKIWN.

It belongs to the WD repeat G protein beta family. As to quaternary structure, g proteins are composed of 3 units, alpha, beta and gamma. Interacts with RASD2.

Its function is as follows. Guanine nucleotide-binding proteins (G proteins) are involved as a modulator or transducer in various transmembrane signaling systems. The beta and gamma chains are required for the GTPase activity, for replacement of GDP by GTP, and for G protein-effector interaction. This is Guanine nucleotide-binding protein G(I)/G(S)/G(T) subunit beta-3 (GNB3) from Homo sapiens (Human).